The primary structure comprises 431 residues: Chaperone SurA (431 aa).

Positions 1 to 20 (MKLTVVTFALLAFISFNTFA) are cleaved as a signal peptide. PpiC domains are found at residues 171–272 (QAEY…KIID) and 281–381 (VAEL…QLMD).

Its subcellular location is the periplasm. The enzyme catalyses [protein]-peptidylproline (omega=180) = [protein]-peptidylproline (omega=0). Functionally, chaperone involved in the correct folding and assembly of outer membrane proteins. Recognizes specific patterns of aromatic residues and the orientation of their side chains, which are found more frequently in integral outer membrane proteins. May act in both early periplasmic and late outer membrane-associated steps of protein maturation. This is Chaperone SurA from Pseudoalteromonas atlantica (strain T6c / ATCC BAA-1087).